The sequence spans 207 residues: Probable GTP-binding protein EngB (207 aa).

The EngB-type G domain maps to 24 to 199 (GGYEVAFAGR…RGIVGGWLGL (176 aa)). Residues 32 to 39 (GRSNAGKS), 59 to 63 (GRTQQ), 77 to 80 (DLPG), 144 to 147 (TKAD), and 178 to 180 (YSG) each bind GTP. Positions 39 and 61 each coordinate Mg(2+).

It belongs to the TRAFAC class TrmE-Era-EngA-EngB-Septin-like GTPase superfamily. EngB GTPase family. Requires Mg(2+) as cofactor.

Necessary for normal cell division and for the maintenance of normal septation. This is Probable GTP-binding protein EngB from Xanthomonas campestris pv. campestris (strain 8004).